We begin with the raw amino-acid sequence, 92 residues long: Small ribosomal subunit protein uS19c (92 aa).

This sequence belongs to the universal ribosomal protein uS19 family.

It localises to the plastid. Its subcellular location is the chloroplast. Functionally, protein S19 forms a complex with S13 that binds strongly to the 16S ribosomal RNA. This Morus indica (Mulberry) protein is Small ribosomal subunit protein uS19c.